Reading from the N-terminus, the 208-residue chain is Dephospho-CoA kinase (208 aa).

Residues 8 to 208 enclose the DPCK domain; sequence LVGVTGGIGS…VYQSLLTVVE (201 aa). Residue 16–21 coordinates ATP; it reads GSGKST.

The protein belongs to the CoaE family.

It localises to the cytoplasm. It catalyses the reaction 3'-dephospho-CoA + ATP = ADP + CoA + H(+). The protein operates within cofactor biosynthesis; coenzyme A biosynthesis; CoA from (R)-pantothenate: step 5/5. In terms of biological role, catalyzes the phosphorylation of the 3'-hydroxyl group of dephosphocoenzyme A to form coenzyme A. The polypeptide is Dephospho-CoA kinase (Chlorobaculum tepidum (strain ATCC 49652 / DSM 12025 / NBRC 103806 / TLS) (Chlorobium tepidum)).